Consider the following 115-residue polypeptide: Large ribosomal subunit protein bL19 (115 aa).

It belongs to the bacterial ribosomal protein bL19 family.

This protein is located at the 30S-50S ribosomal subunit interface and may play a role in the structure and function of the aminoacyl-tRNA binding site. This Lactobacillus acidophilus (strain ATCC 700396 / NCK56 / N2 / NCFM) protein is Large ribosomal subunit protein bL19.